Here is a 455-residue protein sequence, read N- to C-terminus: Keratin, type I cuticular Ha5 (455 aa).

The interval 1-97 (MASKCLKAGF…FGEGILTGNE (97 aa)) is head. Residues 97–408 (EKETMQSLND…GLLESEDSKL (312 aa)) enclose the IF rod domain. Positions 98–132 (KETMQSLNDRLAGYLEKVRQLEQENASLESRIREW) are coil 1A. Residues 133–143 (CEQQVPYMCPD) form a linker 1 region. A coil 1B region spans residues 144 to 244 (YQSYFRTIEE…HEEEVNSLRC (101 aa)). The linker 12 stretch occupies residues 245–260 (QLGDRLNVEVDAAPPV). The tract at residues 261–404 (DLNRVLEEMR…NTYRGLLESE (144 aa)) is coil 2. The tail stretch occupies residues 405–455 (DSKLPCNPCAPDYSPSKSCLPCLPAASCGPSAARTNCSPRPICVPCPGGRF).

This sequence belongs to the intermediate filament family. As to expression, early expression in the hair follicle, mainly found in supramatricial cells and lowermost cortical cells of the hair bulb.

The chain is Keratin, type I cuticular Ha5 (KRT35) from Homo sapiens (Human).